Consider the following 144-residue polypeptide: Large ribosomal subunit protein uL16 (144 aa).

The protein belongs to the universal ribosomal protein uL16 family. As to quaternary structure, part of the 50S ribosomal subunit.

In terms of biological role, binds 23S rRNA and is also seen to make contacts with the A and possibly P site tRNAs. This Acidobacterium capsulatum (strain ATCC 51196 / DSM 11244 / BCRC 80197 / JCM 7670 / NBRC 15755 / NCIMB 13165 / 161) protein is Large ribosomal subunit protein uL16.